The chain runs to 156 residues: Small ribosomal subunit protein uS7 (156 aa).

Belongs to the universal ribosomal protein uS7 family. As to quaternary structure, part of the 30S ribosomal subunit. Contacts proteins S9 and S11.

Functionally, one of the primary rRNA binding proteins, it binds directly to 16S rRNA where it nucleates assembly of the head domain of the 30S subunit. Is located at the subunit interface close to the decoding center, probably blocks exit of the E-site tRNA. The polypeptide is Small ribosomal subunit protein uS7 (Shewanella denitrificans (strain OS217 / ATCC BAA-1090 / DSM 15013)).